The sequence spans 165 residues: Group 10 secretory phospholipase A2 (165 aa).

Positions 1–31 (MGPLPVCLPIMLLLLLPSLLLLLLLPGPGSG) are cleaved as a signal peptide. A propeptide spanning residues 32–42 (EASRILRVHRR) is cleaved from the precursor. 8 disulfides stabilise this stretch: C53/C111, C67/C157, C69/C85, C84/C139, C90/C164, C91/C132, C100/C125, and C118/C130. Ca(2+) contacts are provided by F68, G70, and G72. H88 is an active-site residue. Residue D89 participates in Ca(2+) binding. N113 carries an N-linked (GlcNAc...) asparagine glycan. D133 is a catalytic residue.

The protein belongs to the phospholipase A2 family. As to quaternary structure, interacts with PLA2R1; this interaction mediates PLA2G10 clearance and inactivation. It depends on Ca(2+) as a cofactor. In terms of tissue distribution, found in spleen, thymus, peripheral blood leukocytes, pancreas, lung, and colon. Expressed in neuronal fibers in dorsal root ganglia and in peripheral tissues including stomach, white adipose tissue and prostate (at protein level).

Its subcellular location is the secreted. The protein resides in the lysosome. The protein localises to the cytoplasmic vesicle. It localises to the secretory vesicle. It is found in the acrosome. The catalysed reaction is a 1,2-diacyl-sn-glycero-3-phosphocholine + H2O = a 1-acyl-sn-glycero-3-phosphocholine + a fatty acid + H(+). It catalyses the reaction 1-hexadecanoyl-2-(9Z-octadecenoyl)-sn-glycero-3-phosphocholine + H2O = 1-hexadecanoyl-sn-glycero-3-phosphocholine + (9Z)-octadecenoate + H(+). It carries out the reaction 1-octadecanoyl-2-(5Z,8Z,11Z,14Z-eicosatetraenoyl)-sn-glycero-3-phosphocholine + H2O = 1-octadecanoyl-sn-glycero-3-phosphocholine + (5Z,8Z,11Z,14Z)-eicosatetraenoate + H(+). The enzyme catalyses 1,2-dihexadecanoyl-sn-glycero-3-phosphocholine + H2O = 1-hexadecanoyl-sn-glycero-3-phosphocholine + hexadecanoate + H(+). The catalysed reaction is 1-hexadecanoyl-2-(9Z-octadecenoyl)-sn-glycero-3-phosphoglycerol + H2O = 1-hexadecanoyl-sn-glycero-3-phosphoglycerol + (9Z)-octadecenoate + H(+). It catalyses the reaction 1,2-dihexadecanoyl-sn-glycero-3-phospho-(1'-sn-glycerol) + H2O = 1-hexadecanoyl-sn-glycero-3-phospho-(1'-sn-glycerol) + hexadecanoate + H(+). It carries out the reaction 1-hexadecanoyl-2-(9Z-octadecenoyl)-sn-glycero-3-phospho-L-serine + H2O = 1-hexadecanoyl-sn-glycero-3-phospho-L-serine + (9Z)-octadecenoate + H(+). The enzyme catalyses 1-hexadecanoyl-2-(9Z,12Z-octadecadienoyl)-sn-glycero-3-phosphoethanolamine + H2O = 1-hexadecanoyl-sn-glycero-3-phosphoethanolamine + (9Z,12Z)-octadecadienoate + H(+). The catalysed reaction is 1-hexadecanoyl-2-(9Z-octadecenoyl)-sn-glycero-3-phosphate + H2O = 1-hexadecanoyl-sn-glycero-3-phosphate + (9Z)-octadecenoate + H(+). It catalyses the reaction 1-O-hexadecyl-2-acetyl-sn-glycero-3-phosphocholine + H2O = 1-O-hexadecyl-sn-glycero-3-phosphocholine + acetate + H(+). With respect to regulation, inhibited by methyl indoxam. Functionally, secretory calcium-dependent phospholipase A2 that primarily targets extracellular phospholipids. Hydrolyzes the ester bond of the fatty acyl group attached at sn-2 position of phospholipids with preference for phosphatidylcholines and phosphatidylglycerols over phosphatidylethanolamines. Preferentially releases sn-2 omega-6 and omega-3 polyunsaturated fatty acyl (PUFA) chains over saturated fatty acyls. Contributes to phospholipid remodeling of very low-density lipoprotein (VLDL), low-density lipoprotein (LDL) and high-density lipoprotein (HDL) particles. Hydrolyzes LDL phospholipids releasing unsaturated fatty acids that regulate macrophage differentiation toward foam cells. Efficiently hydrolyzes and inactivates platelet activating factor (PAF), a potent lipid mediator present in oxidized LDL. May act in an autocrine and paracrine manner. Secreted by lung epithelium, targets membrane phospholipids of infiltrating eosinophils, releasing arachidonate and boosting eicosanoid and cysteinyl leukotriene synthesis involved in airway inflammatory response. Secreted by gut epithelium, hydrolyzes dietary and biliary phosphatidylcholines in the gastrointestinal lumen. Plays a stem cell regulator role in colon epithelium. Within intracellular compartment, mediates Paneth-like cell differentiation and its stem cell supporting functions by inhibiting the Wnt signaling pathway in intestinal stem cell (ISC). Secreted in the intestinal lumen upon inflammation, acts in an autocrine way and promotes prostaglandin E2 synthesis that stimulates Wnt signaling pathway in ISCs and tissue regeneration. May participate in hair follicle morphogenesis by regulating phosphatidylethanolamines metabolism at the outermost epithelial layer and facilitating melanin synthesis. By releasing lysophosphatidylcholines (LPCs) at sperm acrosome, controls sperm cell capacitation, acrosome reaction and overall fertility. May promote neurite outgrowth in neuron fibers involved in nociception. Contributes to lipid remodeling of cellular membranes and generation of lipid mediators involved in pathogen clearance. Cleaves sn-2 fatty acyl chains of phosphatidylglycerols and phosphatidylethanolamines, which are major components of membrane phospholipids in bacteria. Displays bactericidal activity against Gram-positive bacteria by directly hydrolyzing phospholipids of the bacterial membrane. In pulmonary epithelium, may contribute to host defense response against adenoviral infection. Prevents adenovirus entry into host cells by hydrolyzing host cell plasma membrane, releasing C16:0 LPCs that inhibit virus-mediated membrane fusion and viral infection. Likely prevents adenoviral entry into the endosomes of host cells. May play a role in maturation and activation of innate immune cells including macrophages, group 2 innate lymphoid cells and mast cells. This is Group 10 secretory phospholipase A2 (PLA2G10) from Homo sapiens (Human).